A 434-amino-acid polypeptide reads, in one-letter code: Enolase (434 aa).

Substrate-binding residues include His158 and Glu167. The active-site Proton donor is Glu210. Mg(2+) contacts are provided by Asp245, Glu294, and Asp319. Glu294 and Asp319 together coordinate substrate. Lys344 acts as the Proton acceptor in catalysis. Substrate contacts are provided by residues Ser371–Ser374 and Lys395.

Belongs to the enolase family. In terms of assembly, homodimer. Mg(2+) is required as a cofactor.

Its subcellular location is the cytoplasm. It carries out the reaction (2R)-2-phosphoglycerate = phosphoenolpyruvate + H2O. It participates in carbohydrate degradation; glycolysis; pyruvate from D-glyceraldehyde 3-phosphate: step 4/5. The chain is Enolase (ENO) from Schistosoma mansoni (Blood fluke).